Reading from the N-terminus, the 310-residue chain is Aspartate carbamoyltransferase catalytic subunit 1 (310 aa).

The carbamoyl phosphate site is built by R55 and T56. K85 lines the L-aspartate pocket. Carbamoyl phosphate-binding residues include R106, H134, and Q137. L-aspartate is bound by residues R167 and R228. Residues L266 and P267 each coordinate carbamoyl phosphate.

Belongs to the aspartate/ornithine carbamoyltransferase superfamily. ATCase family. In terms of assembly, heterododecamer (2C3:3R2) of six catalytic PyrB chains organized as two trimers (C3), and six regulatory PyrI chains organized as three dimers (R2).

The enzyme catalyses carbamoyl phosphate + L-aspartate = N-carbamoyl-L-aspartate + phosphate + H(+). It participates in pyrimidine metabolism; UMP biosynthesis via de novo pathway; (S)-dihydroorotate from bicarbonate: step 2/3. Its function is as follows. Catalyzes the condensation of carbamoyl phosphate and aspartate to form carbamoyl aspartate and inorganic phosphate, the committed step in the de novo pyrimidine nucleotide biosynthesis pathway. This is Aspartate carbamoyltransferase catalytic subunit 1 from Shewanella halifaxensis (strain HAW-EB4).